The following is a 500-amino-acid chain: MEEFQGYLELDRYQQHDFLHPLIFREYIYALAHDHGLNRSILLGYDNKSSLLIIKRLISRMYKQNRFIISANDSNQKKNLGYNKNLYSQIISEGFAVIVEIPFSLRLVSSATEIVKSYNLRSIHSIFPFLEDKFPQLNYVSDVLIPYPIHLEILVQTLRYWVKDASSLHLLRLFLHEYYNWNSLITSNNFFFFSKSNPRLFLLLYNSHVCEYEFILLFLRNQSSHLQLISSGIFFERIHFYEKIKYPVEEVFANDFPAAILWFFKDPFMHYVRYQGKSILASKDTPLLMNKWKYYLVNLWQCHSYVWSQPGRIYINKLSKHSLDFLGYFSSIRPNLSVVRSQMLENSFITDNAMKKLDTLVPIIPLIGSLAKVKFCNALGHPISKSTWADSSDFDIIDRFLRIFRNLSHYYSGSSRKKSLYRIKYILRLSCVKTLARKHKSTVRTFLKRLGSKLLEEFFTEEEQILSLIFPRASYTLKKFYSGRIWYLDIFCINDLINHE.

This sequence belongs to the intron maturase 2 family. MatK subfamily.

It is found in the plastid. It localises to the chloroplast. Functionally, usually encoded in the trnK tRNA gene intron. Probably assists in splicing its own and other chloroplast group II introns. This chain is Maturase K, found in Prunus laurocerasus (Cherry laurel).